Consider the following 72-residue polypeptide: Translation initiation factor IF-1 (72 aa).

The region spanning 1-72 (MAKEETIQMQ…TRARITFRTK (72 aa)) is the S1-like domain.

The protein belongs to the IF-1 family. As to quaternary structure, component of the 30S ribosomal translation pre-initiation complex which assembles on the 30S ribosome in the order IF-2 and IF-3, IF-1 and N-formylmethionyl-tRNA(fMet); mRNA recruitment can occur at any time during PIC assembly.

It is found in the cytoplasm. Its function is as follows. One of the essential components for the initiation of protein synthesis. Stabilizes the binding of IF-2 and IF-3 on the 30S subunit to which N-formylmethionyl-tRNA(fMet) subsequently binds. Helps modulate mRNA selection, yielding the 30S pre-initiation complex (PIC). Upon addition of the 50S ribosomal subunit IF-1, IF-2 and IF-3 are released leaving the mature 70S translation initiation complex. This Nitrosomonas eutropha (strain DSM 101675 / C91 / Nm57) protein is Translation initiation factor IF-1.